The sequence spans 232 residues: Adenosylcobinamide-GDP ribazoletransferase (232 aa).

Transmembrane regions (helical) follow at residues 24-44 (LWAFPLVSLVSSIIPIAILYL), 46-66 (IPLANVLALLSLYFVIGLLHL), 96-116 (IAGVFAVVVVLFLQVYSLSML), 117-137 (PFYAIYIAELNSKFSMLLGLA), 153-173 (GMNGRQLAIGVVLYVLLYLPV), 174-194 (VIYDPSALFGVMGLVFAWYVI), and 210-230 (GAMAEITRAGTLVILSFSLCF).

The protein belongs to the CobS family. Mg(2+) is required as a cofactor.

The protein resides in the cell membrane. It catalyses the reaction alpha-ribazole + adenosylcob(III)inamide-GDP = adenosylcob(III)alamin + GMP + H(+). The enzyme catalyses alpha-ribazole 5'-phosphate + adenosylcob(III)inamide-GDP = adenosylcob(III)alamin 5'-phosphate + GMP + H(+). Its pathway is cofactor biosynthesis; adenosylcobalamin biosynthesis; adenosylcobalamin from cob(II)yrinate a,c-diamide: step 7/7. Joins adenosylcobinamide-GDP and alpha-ribazole to generate adenosylcobalamin (Ado-cobalamin). Also synthesizes adenosylcobalamin 5'-phosphate from adenosylcobinamide-GDP and alpha-ribazole 5'-phosphate. This is Adenosylcobinamide-GDP ribazoletransferase from Pyrococcus abyssi (strain GE5 / Orsay).